Here is a 295-residue protein sequence, read N- to C-terminus: Defective in cullin neddylation protein AAR3 (295 aa).

In terms of domain architecture, DCUN1 spans 1–180 (MDSSPVSARF…LIDDFVEHMY (180 aa)). A Nuclear localization signal motif is present at residues 214–221 (YRRPHTGL). The disordered stretch occupies residues 214-251 (YRRPHTGLRNIPGLKRKTSKKNDEEEEDEDEEVLETQN). Acidic residues predominate over residues 237-247 (EEEEDEDEEVL).

The protein resides in the nucleus. Its function is as follows. May contribute to the neddylation of all cullins by transferring NEDD8 from N-terminally acetylated NEDD8-conjugating E2s enzyme to different cullin C-terminal domain-RBX complexes; neddylation of cullins play an essential role in the regulation of SCF-type complexes activity. Regulates responses to the synthetic auxin 2,4-dichlorophenoxyacetic acid (2,4-D) in roots, probably by modulating the SCF(TIR1) ubiquitin E3 ligase complex-mediated proteolysis. The polypeptide is Defective in cullin neddylation protein AAR3 (Arabidopsis thaliana (Mouse-ear cress)).